The chain runs to 247 residues: uncharacterized protein (247 aa).

The protein belongs to the AIM2 family.

Its subcellular location is the cytoplasm. It is found in the nucleus. This is an uncharacterized protein from Schizosaccharomyces pombe (strain 972 / ATCC 24843) (Fission yeast).